We begin with the raw amino-acid sequence, 103 residues long: N(4)-acetylcytidine amidohydrolase (103 aa).

In terms of domain architecture, ASCH spans 6-101 (ITFFQRFQDD…QTQFYVIEFK (96 aa)). K21 functions as the Proton acceptor in the catalytic mechanism. T24 functions as the Nucleophile in the catalytic mechanism. The Proton donor role is filled by E74.

It belongs to the N(4)-acetylcytidine amidohydrolase family.

The enzyme catalyses N(4)-acetylcytidine + H2O = cytidine + acetate + H(+). It carries out the reaction N(4)-acetyl-2'-deoxycytidine + H2O = 2'-deoxycytidine + acetate + H(+). It catalyses the reaction N(4)-acetylcytosine + H2O = cytosine + acetate + H(+). Catalyzes the hydrolysis of N(4)-acetylcytidine (ac4C). The polypeptide is N(4)-acetylcytidine amidohydrolase (yqfB) (Escherichia coli O8 (strain IAI1)).